We begin with the raw amino-acid sequence, 1096 residues long: Carbamoyl phosphate synthase large chain (1096 aa).

The interval 1–402 (MPKRDDINSV…ALQKALRSLE (402 aa)) is carboxyphosphate synthetic domain. The ATP site is built by R129, R169, G175, G176, E208, I210, E215, G241, V242, H243, Q285, and E299. The region spanning 133-328 (KDLVIESGAD…IAKIAAKLAI (196 aa)) is the ATP-grasp 1 domain. The Mg(2+) site is built by Q285, E299, and N301. Q285, E299, and N301 together coordinate Mn(2+). The tract at residues 403 to 547 (KRGSSFHWGA…YSSYDSETEI (145 aa)) is oligomerization domain. A carbamoyl phosphate synthetic domain region spans residues 548-950 (VPSDRRKVII…AFAKSQEAAF (403 aa)). Residues 676–870 (SGILDAAGLV…LAKAASLVMV (195 aa)) enclose the ATP-grasp 2 domain. ATP is bound by residues R712, R754, L756, E761, G786, I787, H788, S789, Q829, and E841. Residues Q829, E841, and N843 each coordinate Mg(2+). Positions 829, 841, and 843 each coordinate Mn(2+). Residues 951 to 1095 (GGLPLSGTVF…QDYAIAREAR (145 aa)) enclose the MGS-like domain. Positions 951–1096 (GGLPLSGTVF…DYAIAREARR (146 aa)) are allosteric domain.

This sequence belongs to the CarB family. In terms of assembly, composed of two chains; the small (or glutamine) chain promotes the hydrolysis of glutamine to ammonia, which is used by the large (or ammonia) chain to synthesize carbamoyl phosphate. Tetramer of heterodimers (alpha,beta)4. It depends on Mg(2+) as a cofactor. The cofactor is Mn(2+).

It catalyses the reaction hydrogencarbonate + L-glutamine + 2 ATP + H2O = carbamoyl phosphate + L-glutamate + 2 ADP + phosphate + 2 H(+). The catalysed reaction is hydrogencarbonate + NH4(+) + 2 ATP = carbamoyl phosphate + 2 ADP + phosphate + 2 H(+). It functions in the pathway amino-acid biosynthesis; L-arginine biosynthesis; carbamoyl phosphate from bicarbonate: step 1/1. Its pathway is pyrimidine metabolism; UMP biosynthesis via de novo pathway; (S)-dihydroorotate from bicarbonate: step 1/3. Large subunit of the glutamine-dependent carbamoyl phosphate synthetase (CPSase). CPSase catalyzes the formation of carbamoyl phosphate from the ammonia moiety of glutamine, carbonate, and phosphate donated by ATP, constituting the first step of 2 biosynthetic pathways, one leading to arginine and/or urea and the other to pyrimidine nucleotides. The large subunit (synthetase) binds the substrates ammonia (free or transferred from glutamine from the small subunit), hydrogencarbonate and ATP and carries out an ATP-coupled ligase reaction, activating hydrogencarbonate by forming carboxy phosphate which reacts with ammonia to form carbamoyl phosphate. This chain is Carbamoyl phosphate synthase large chain, found in Clavibacter sepedonicus (Clavibacter michiganensis subsp. sepedonicus).